The sequence spans 178 residues: ATP-dependent protease subunit HslV (178 aa).

Thr7 is a catalytic residue. Residues Gly162, Cys165, and Thr168 each coordinate Na(+).

It belongs to the peptidase T1B family. HslV subfamily. A double ring-shaped homohexamer of HslV is capped on each side by a ring-shaped HslU homohexamer. The assembly of the HslU/HslV complex is dependent on binding of ATP.

The protein resides in the cytoplasm. It catalyses the reaction ATP-dependent cleavage of peptide bonds with broad specificity.. Its activity is regulated as follows. Allosterically activated by HslU binding. Protease subunit of a proteasome-like degradation complex believed to be a general protein degrading machinery. This chain is ATP-dependent protease subunit HslV, found in Burkholderia ambifaria (strain MC40-6).